The following is a 288-amino-acid chain: dTDP-4-keto-6-deoxy-D-glucose reductase (288 aa).

Residues 12-14 (GML), 38-39 (DI), 62-64 (AWT), Tyr127, and Lys131 contribute to the NADH site. NADPH is bound by residues 13 to 14 (ML), 38 to 39 (DI), 62 to 64 (AWT), Tyr127, and Lys131. Residue Tyr127 is the Proton donor/acceptor of the active site.

This sequence belongs to the dTDP-4-dehydrorhamnose reductase family. The cofactor is Mg(2+).

Its pathway is antibiotic biosynthesis; novobiocin biosynthesis. Reduces the product formed from the reaction of NovW with dTDP-4-keto-6-deoxy-D-glucose to result in dTDP-5-methyl-L-rhamnose in the novobiocin biosynthesis pathway, an aminocoumarin family antibiotic that targets bacterial DNA gyrases. This chain is dTDP-4-keto-6-deoxy-D-glucose reductase (novS), found in Streptomyces niveus (Streptomyces spheroides).